The primary structure comprises 223 residues: UPF0441 protein YgiB (223 aa).

Over residues 178–195 (TVPKTAMAPKPATTTTVT) the composition is skewed to low complexity. The interval 178 to 223 (TVPKTAMAPKPATTTTVTRGGFGESVAKQSTMQRGATGTSSRSMGG) is disordered. Over residues 204 to 223 (AKQSTMQRGATGTSSRSMGG) the composition is skewed to polar residues.

This sequence belongs to the UPF0441 family.

The polypeptide is UPF0441 protein YgiB (Escherichia coli O6:K15:H31 (strain 536 / UPEC)).